Consider the following 284-residue polypeptide: 4-hydroxybenzoate octaprenyltransferase (284 aa).

Transmembrane regions (helical) follow at residues 16–36 (PIGILLLLWPTLWALWMASDG), 40–60 (WTLVAIFTLGTVLMRSAGCAV), 91–111 (LLVALVLTLLAFALIWPLNTL), 132–152 (FFAIPQAYLGIAFGFGIPMGF), 157–177 (NTVPAAAWWLLVANVFWSVAY), 207–227 (AIIMFCYAMTLGIIGIVGWQF), 231–251 (IWFVAGLLLAAVCAAYHYTLI), and 259–279 (CFAAFNHNNWLGGAIFGGVAL).

It belongs to the UbiA prenyltransferase family. Mg(2+) serves as cofactor.

It localises to the cell inner membrane. The catalysed reaction is all-trans-octaprenyl diphosphate + 4-hydroxybenzoate = 4-hydroxy-3-(all-trans-octaprenyl)benzoate + diphosphate. Its pathway is cofactor biosynthesis; ubiquinone biosynthesis. Catalyzes the prenylation of para-hydroxybenzoate (PHB) with an all-trans polyprenyl group. Mediates the second step in the final reaction sequence of ubiquinone-8 (UQ-8) biosynthesis, which is the condensation of the polyisoprenoid side chain with PHB, generating the first membrane-bound Q intermediate 3-octaprenyl-4-hydroxybenzoate. The chain is 4-hydroxybenzoate octaprenyltransferase from Janthinobacterium sp. (strain Marseille) (Minibacterium massiliensis).